The chain runs to 156 residues: uncharacterized protein (156 aa).

Helical transmembrane passes span Leu-42 to Val-59, Ala-79 to Tyr-98, and Ser-105 to Ile-127.

The protein resides in the cell membrane. This is an uncharacterized protein from Archaeoglobus fulgidus (strain ATCC 49558 / DSM 4304 / JCM 9628 / NBRC 100126 / VC-16).